The primary structure comprises 320 residues: MVKKIGVLTSGGDAPGMNAAVRGVVRTALTQGLEVFGIHDGYLGLVEDRIEKLERHSVSDMINRGGTFLGSARFPEFKEVAVREKAIANLKKHDIDALIVIGGDGSYMGAKKLTEMGYPCIGLPGTIDNDIAGTDYTIGYLTALNTVIDAIDRLRDTSSSHQRISIVEVMGRHCGDLTLMAAIAGGCEYVITPETGLNKEALIQNIQDGIAKGKKHAIIAITELMTDVNALAKEIEAETGRETRATVLGHIQRGGQPGAFDRILASRMGNYGVKLLVEGHGGRCVGIQNEQLVHHDIIDAIENMRRPEKLELYKVAEELF.

Glycine 12 is a binding site for ATP. ADP is bound at residue 22 to 26 (RGVVR). Residues 73–74 (RF) and 103–106 (GDGS) contribute to the ATP site. Aspartate 104 lines the Mg(2+) pocket. Substrate is bound at residue 126–128 (TID). Catalysis depends on aspartate 128, which acts as the Proton acceptor. Arginine 155 is a binding site for ADP. Residues arginine 163 and 170–172 (MGR) contribute to the substrate site. ADP contacts are provided by residues 186–188 (GCE), lysine 212, and 214–216 (KKH). Substrate contacts are provided by residues glutamate 223, arginine 244, and 250–253 (HIQR).

The protein belongs to the phosphofructokinase type A (PFKA) family. ATP-dependent PFK group I subfamily. Prokaryotic clade 'B1' sub-subfamily. Homotetramer. Mg(2+) serves as cofactor.

The protein resides in the cytoplasm. The enzyme catalyses beta-D-fructose 6-phosphate + ATP = beta-D-fructose 1,6-bisphosphate + ADP + H(+). The protein operates within carbohydrate degradation; glycolysis; D-glyceraldehyde 3-phosphate and glycerone phosphate from D-glucose: step 3/4. Its activity is regulated as follows. Allosterically activated by ADP and other diphosphonucleosides, and allosterically inhibited by phosphoenolpyruvate. Catalyzes the phosphorylation of D-fructose 6-phosphate to fructose 1,6-bisphosphate by ATP, the first committing step of glycolysis. This Aliivibrio salmonicida (strain LFI1238) (Vibrio salmonicida (strain LFI1238)) protein is ATP-dependent 6-phosphofructokinase.